The primary structure comprises 152 residues: Small ribosomal subunit protein bS16 (152 aa).

The span at 118–130 shows a compositional bias: basic and acidic residues; the sequence is AEKHKAKASEKKA. A disordered region spans residues 118–152; sequence AEKHKAKASEKKAAAAASADEAGSAAADDAEGSES. Low complexity predominate over residues 131-144; the sequence is AAAASADEAGSAAA.

This sequence belongs to the bacterial ribosomal protein bS16 family.

In Beutenbergia cavernae (strain ATCC BAA-8 / DSM 12333 / CCUG 43141 / JCM 11478 / NBRC 16432 / NCIMB 13614 / HKI 0122), this protein is Small ribosomal subunit protein bS16.